A 232-amino-acid chain; its full sequence is Floral homeotic protein APETALA 3 (232 aa).

Positions Arg3–Tyr57 constitute an MADS-box domain. Residues Ser75–Leu164 adopt a coiled-coil conformation. The K-box domain occupies Tyr84–Asp174.

As to quaternary structure, forms a heterodimer with PISTILLATA, capable of binding to CArG-box sequences. AP3/PI heterodimer binds AP1 or SEP3 to form complexes. In terms of tissue distribution, expressed in petals and stamens.

The protein resides in the nucleus. In terms of biological role, probable transcription factor involved in the genetic control of flower development. Is required for normal development of petals and stamens in the wild-type flower. Forms a heterodimer with PISTILLATA that is required for autoregulation of both AP3 and PI genes. AP3/PI heterodimer interacts with APETALA1 or SEPALLATA3 to form a ternary complex that could be responsible for the regulation of the genes involved in the flower development. AP3/PI heterodimer activates the expression of NAP. AP3/PI prevents GATA22/GNL and GATA21/GNC expression. In Arabidopsis thaliana (Mouse-ear cress), this protein is Floral homeotic protein APETALA 3 (AP3).